Consider the following 230-residue polypeptide: Ureidoacrylate amidohydrolase RutB (230 aa).

The active-site Proton acceptor is the Asp24. Lys133 is an active-site residue. Cys166 serves as the catalytic Nucleophile.

The protein belongs to the isochorismatase family. RutB subfamily.

The catalysed reaction is (Z)-3-ureidoacrylate + H2O + H(+) = (Z)-3-aminoacrylate + NH4(+) + CO2. It carries out the reaction (Z)-3-ureidoacrylate + H2O = (Z)-3-aminoacrylate + carbamate + H(+). The enzyme catalyses (Z)-2-methylureidoacrylate + H2O + H(+) = (Z)-2-methylaminoacrylate + NH4(+) + CO2. In terms of biological role, hydrolyzes ureidoacrylate to form aminoacrylate and carbamate. The carbamate hydrolyzes spontaneously, thereby releasing one of the nitrogen atoms of the pyrimidine ring as ammonia and one of its carbon atoms as CO2. The sequence is that of Ureidoacrylate amidohydrolase RutB from Escherichia coli O103:H2 (strain 12009 / EHEC).